We begin with the raw amino-acid sequence, 47 residues long: MKFFMVLLPASLASTSLAILDVESGLLPQLSVLLSNRLRGKTCQTGP.

Positions 1-18 are cleaved as a signal peptide; sequence MKFFMVLLPASLASTSLA.

The protein belongs to the PP3/GlyCAM-1 family. In terms of tissue distribution, expressed in cells harvested from milk of lactating women. Not found in other tissues.

In Homo sapiens (Human), this protein is Putative glycosylation-dependent cell adhesion molecule 1 (GLYCAM1).